The following is a 159-amino-acid chain: NADH-quinone oxidoreductase subunit I (159 aa).

4Fe-4S ferredoxin-type domains lie at 51–80 (RRYE…IESD) and 90–119 (TRYD…EGPN). [4Fe-4S] cluster-binding residues include Cys60, Cys63, Cys66, Cys70, Cys99, Cys102, Cys105, and Cys109.

This sequence belongs to the complex I 23 kDa subunit family. NDH-1 is composed of 14 different subunits. Subunits NuoA, H, J, K, L, M, N constitute the membrane sector of the complex. It depends on [4Fe-4S] cluster as a cofactor.

The protein resides in the cell inner membrane. The enzyme catalyses a quinone + NADH + 5 H(+)(in) = a quinol + NAD(+) + 4 H(+)(out). Its function is as follows. NDH-1 shuttles electrons from NADH, via FMN and iron-sulfur (Fe-S) centers, to quinones in the respiratory chain. The immediate electron acceptor for the enzyme in this species is believed to be ubiquinone. Couples the redox reaction to proton translocation (for every two electrons transferred, four hydrogen ions are translocated across the cytoplasmic membrane), and thus conserves the redox energy in a proton gradient. The chain is NADH-quinone oxidoreductase subunit I from Rickettsia typhi (strain ATCC VR-144 / Wilmington).